We begin with the raw amino-acid sequence, 189 residues long: dCTP deaminase (189 aa).

DCTP contacts are provided by residues 112–117 (KSTYAR), 136–138 (TLE), Gln157, Tyr171, and Gln181. Residue Glu138 is the Proton donor/acceptor of the active site.

It belongs to the dCTP deaminase family. Homotrimer.

It catalyses the reaction dCTP + H2O + H(+) = dUTP + NH4(+). Its pathway is pyrimidine metabolism; dUMP biosynthesis; dUMP from dCTP (dUTP route): step 1/2. Functionally, catalyzes the deamination of dCTP to dUTP. This Xanthomonas campestris pv. campestris (strain 8004) protein is dCTP deaminase.